Reading from the N-terminus, the 667-residue chain is Protein OS-9 (667 aa).

Residues Met-1–Thr-25 form the signal peptide. An MRH domain is found at Ala-108–His-230. Cys-110 and Cys-123 form a disulfide bridge. Trp-117, Trp-118, and Gln-130 together coordinate a mannooligosaccharide derivative. A glycan (N-linked (GlcNAc...) asparagine) is linked at Asn-177. Disulfide bonds link Cys-181–Cys-216 and Cys-196–Cys-228. Asp-182, Arg-188, Glu-212, and Tyr-218 together coordinate a mannooligosaccharide derivative. 5 disordered regions span residues Trp-284–Gln-355, Leu-372–Leu-452, Leu-464–Glu-483, Leu-504–Arg-540, and Ala-633–Phe-667. Composition is skewed to basic and acidic residues over residues Thr-302 to Phe-311 and Pro-396 to Glu-412. A compositionally biased stretch (acidic residues) spans Met-413–Glu-429. The segment covering Arg-430–Leu-452 has biased composition (basic and acidic residues). A compositionally biased stretch (basic and acidic residues) spans Leu-504–Val-513. The span at Lys-514 to Pro-523 shows a compositional bias: basic residues. Basic and acidic residues predominate over residues Ala-633 to Tyr-647.

The protein belongs to the OS-9 family. Component of the HRD1 complex, which comprises at least SYNV1/HRD1, DERL1/2, FAM8A1, HERPUD1/HERP, OS9, SEL1L and UBE2J1. FAM8A1 is stabilized by interaction with SYNV1, which prevents its proteasomal degradation. OS9 and UBE2J1 recruitment to the complex may be mediated by SEL1L. Through this complex, may interact with ERLEC1 and HSPA5. Interacts (via C-terminus) with CPNE6 (via second C2 domain); this interaction occurs in a calcium-dependent manner in vitro. Interacts with CREB3. Post-translationally, intramolecular disulfide bonds. Isoform 1 and isoform 2 are N-glycosylated. As to expression, ubiquitously expressed. Found as well in all tumor cell lines analyzed, amplified in sarcomas. Highly expressed in osteosarcoma SJSA-1 and rhabdomyosarcoma Rh30 cell lines. Isoform 2 is the major isoform detected in all cell types examined.

The protein localises to the endoplasmic reticulum lumen. Functionally, lectin component of the HRD1 complex, which functions in endoplasmic reticulum (ER) quality control and ER-associated degradation (ERAD). Specifically recognizes and binds improperly folded glycoproteins as well as hyperglycosylated proteins, retain them in the ER, and transfers them to the ubiquitination machinery and promote their degradation. Possible targets include TRPV4 as well as hyperglycosylated HSP90B1. The polypeptide is Protein OS-9 (OS9) (Homo sapiens (Human)).